A 908-amino-acid polypeptide reads, in one-letter code: Glutamate receptor ionotropic, kainate 2 (908 aa).

The first 31 residues, 1–31 (MKIIFPILSNPVFRRTVKLLLCLLWIGYSQG), serve as a signal peptide directing secretion. At 32–561 (TTHVLRFGGI…VFSFLNPLSP (530 aa)) the chain is on the extracellular side. N-linked (GlcNAc...) asparagine glycans are attached at residues Asn-67, Asn-73, Asn-275, Asn-378, Asn-412, Asn-423, and Asn-430. Cysteines 96 and 347 form a disulfide. Positions 516, 518, and 523 each coordinate L-glutamate. An N-linked (GlcNAc...) asparagine glycan is attached at Asn-546. Residues 562-582 (DIWMYVLLACLGVSCVLFVIA) traverse the membrane as a helical segment. At 583 to 638 (RFSPYEWYNPHPCNPDSDVVENNFTLLNSFWFGVGALMRQGSELMPKALSTRIVGG) the chain is on the cytoplasmic side. A helical membrane pass occupies residues 639–659 (IWWFFTLIIISSYTANLAAFL). At 660 to 819 (TVERMESPID…KEASALGVQN (160 aa)) the chain is on the extracellular side. Residues Ala-689, Thr-690, and Glu-738 each coordinate L-glutamate. Cys-750 and Cys-804 are oxidised to a cystine. N-linked (GlcNAc...) asparagine glycosylation occurs at Asn-751. Residues 820–840 (IGGIFIVLAAGLVLSVFVAVG) traverse the membrane as a helical segment. Residues 841–908 (EFLYKSKKNA…RRLPGKETMA (68 aa)) lie on the Cytoplasmic side of the membrane. 2 positions are modified to phosphoserine; by PKC: Ser-846 and Ser-868. Lys-886 participates in a covalent cross-link: Glycyl lysine isopeptide (Lys-Gly) (interchain with G-Cter in SUMO1).

The protein belongs to the glutamate-gated ion channel (TC 1.A.10.1) family. GRIK2 subfamily. Homotetramer and heterotetramer with GRIK5. Tetramers may be formed by the dimerization of dimers. Assembles into a kainate-gated homomeric channel that does not bind AMPA. Can form functional heteromeric receptors with GRIK3, GRIK4 and GRIK5. Interacts with NETO2. Interacts with DLG4. Interacts with NETO2. Interacts (via C-terminus) with KLHL17 (via kelch repeats); the interaction targets GRIK2 for degradation via ubiquitin-proteasome pathway. Sumoylation mediates kainate receptor-mediated endocytosis and regulates synaptic transmission. Sumoylation is enhanced by PIAS3 and desumoylated by SENP1. In terms of processing, ubiquitinated. Ubiquitination regulates the GRIK2 levels at the synapse by leading kainate receptor degradation through proteasome. Post-translationally, phosphorylated by PKC at Ser-868 upon agonist activation, this directly enhance sumoylation.

It localises to the cell membrane. The protein localises to the postsynaptic cell membrane. The catalysed reaction is Ca(2+)(in) = Ca(2+)(out). It carries out the reaction Na(+)(in) = Na(+)(out). With respect to regulation, cold receptor activity activated by temperatures between 10-19 degrees Celsius. In terms of biological role, ionotropic glutamate receptor that functions as a cation-permeable ligand-gated ion channel, gated by L-glutamate and the glutamatergic agonist kainic acid. L-glutamate acts as an excitatory neurotransmitter at many synapses in the central nervous system. Binding of the excitatory neurotransmitter L-glutamate induces a conformation change, leading to the opening of the cation channel, and thereby converts the chemical signal to an electrical impulse. The receptor then desensitizes rapidly and enters a transient inactive state, characterized by the presence of bound agonist. Modulates cell surface expression of NETO2. In association with GRIK3, involved in presynaptic facilitation of glutamate release at hippocampal mossy fiber synapses. Functionally, independent of its ionotropic glutamate receptor activity, acts as a thermoreceptor conferring sensitivity to cold temperatures. Functions in dorsal root ganglion neurons. The sequence is that of Glutamate receptor ionotropic, kainate 2 (GRIK2) from Macaca fascicularis (Crab-eating macaque).